A 354-amino-acid chain; its full sequence is Methionine import ATP-binding protein MetN (354 aa).

The 243-residue stretch at 8-250 (LDHIDITFRQ…PKEALTQKFI (243 aa)) folds into the ABC transporter domain. 42-49 (GYSGAGKS) contributes to the ATP binding site.

The protein belongs to the ABC transporter superfamily. Methionine importer (TC 3.A.1.24) family. The complex is composed of two ATP-binding proteins (MetN), two transmembrane proteins (MetI) and a solute-binding protein (MetQ).

It is found in the cell membrane. The catalysed reaction is L-methionine(out) + ATP + H2O = L-methionine(in) + ADP + phosphate + H(+). It carries out the reaction D-methionine(out) + ATP + H2O = D-methionine(in) + ADP + phosphate + H(+). Functionally, part of the ABC transporter complex MetNIQ involved in methionine import. Responsible for energy coupling to the transport system. In Streptococcus pyogenes serotype M18 (strain MGAS8232), this protein is Methionine import ATP-binding protein MetN.